The sequence spans 113 residues: Large ribosomal subunit protein P2 (113 aa).

Residues P66–E113 are disordered. Residues V73–G85 are compositionally biased toward low complexity. A compositionally biased stretch (basic and acidic residues) spans G86 to E99. S100 and S102 each carry phosphoserine.

Belongs to the eukaryotic ribosomal protein P1/P2 family. P1 and P2 exist as dimers at the large ribosomal subunit.

Its function is as follows. Plays an important role in the elongation step of protein synthesis. This chain is Large ribosomal subunit protein P2 (RpLP2), found in Drosophila melanogaster (Fruit fly).